Here is a 292-residue protein sequence, read N- to C-terminus: Undecaprenyl-diphosphatase (292 aa).

7 consecutive transmembrane segments (helical) span residues 1-21 (MSLV…FLPV), 46-66 (FVTI…RADI), 90-110 (LGWY…LLEH), 114-134 (ALGN…LLAA), 192-212 (FLLS…STVP), 225-245 (VVGT…LLAW), and 253-273 (VFVV…LSGV).

This sequence belongs to the UppP family.

The protein localises to the cell inner membrane. It carries out the reaction di-trans,octa-cis-undecaprenyl diphosphate + H2O = di-trans,octa-cis-undecaprenyl phosphate + phosphate + H(+). Functionally, catalyzes the dephosphorylation of undecaprenyl diphosphate (UPP). Confers resistance to bacitracin. The chain is Undecaprenyl-diphosphatase from Anaeromyxobacter sp. (strain K).